An 81-amino-acid chain; its full sequence is Cytotoxin 5 (81 aa).

An N-terminal signal peptide occupies residues 1-21 (MKTLLLTLVVVTIVCLDLGYT). 4 disulfide bridges follow: C24-C42, C35-C59, C63-C74, and C75-C80.

It belongs to the three-finger toxin family. Short-chain subfamily. Type IA cytotoxin sub-subfamily. In terms of assembly, monomer in solution; Homodimer and oligomer in the presence of negatively charged lipids forming a pore with a size ranging between 20 and 30 Angstroms. As to expression, expressed by the venom gland.

Its subcellular location is the secreted. The protein resides in the target cell membrane. In terms of biological role, shows cytolytic activity on many different cells by forming pore in lipid membranes. In vivo, increases heart rate or kills the animal by cardiac arrest. In addition, it binds to heparin with high affinity, interacts with Kv channel-interacting protein 1 (KCNIP1) in a calcium-independent manner, and binds to integrin alpha-V/beta-3 (ITGAV/ITGB3) with moderate affinity. This is Cytotoxin 5 from Naja atra (Chinese cobra).